A 419-amino-acid chain; its full sequence is Transcription termination factor Rho (419 aa).

The Rho RNA-BD domain occupies glutamate 48–arginine 123. RNA-binding regions lie at residues glycine 61–arginine 66, aspartate 78–tyrosine 80, and glutamate 108–tyrosine 110. Residues glycine 169–glycine 174, lysine 181–isoleucine 186, and arginine 212 each bind ATP. Residues valine 284–glycine 288 form an RNA-binding 2 region.

The protein belongs to the Rho family. Homohexamer. The homohexamer assembles into an open ring structure.

Functionally, facilitates transcription termination by a mechanism that involves Rho binding to the nascent RNA, activation of Rho's RNA-dependent ATPase activity, and release of the mRNA from the DNA template. This chain is Transcription termination factor Rho, found in Pseudomonas aeruginosa (strain ATCC 15692 / DSM 22644 / CIP 104116 / JCM 14847 / LMG 12228 / 1C / PRS 101 / PAO1).